A 338-amino-acid chain; its full sequence is Acyl-CoA Delta(11) desaturase (338 aa).

2 consecutive transmembrane segments (helical) span residues 33 to 53 and 61 to 81; these read IVYF…YGLY and WATV…VTAG. A Histidine box-1 motif is present at residues 83-88; that stretch reads HRLWSH. Residues 97 to 117 form a helical membrane-spanning segment; that stretch reads LQILLMVMNSLAFQNTVIDWV. The Histidine box-2 signature appears at 120–124; the sequence is HRLHH. The next 2 helical transmembrane spans lie at 181–201 and 212–234; these read AIPF…VYGW and AMLR…HIYG. The Histidine box-3 motif lies at 260–264; it reads HNYHH. A disordered region spans residues 318 to 338; sequence TNLWGLEDVDTPEDLKNTKGE.

This sequence belongs to the fatty acid desaturase type 1 family. Requires Fe cation as cofactor. In terms of tissue distribution, detected in the pheromone gland.

It localises to the membrane. It catalyses the reaction an 11,12-saturated fatty acyl-CoA + 2 Fe(II)-[cytochrome b5] + O2 + 2 H(+) = an (11Z)-Delta(11)-fatty acyl-CoA + 2 Fe(III)-[cytochrome b5] + 2 H2O. Its function is as follows. Catalyzes the formation of delta(11) fatty acyl precursors in the pheromone gland, and has high activity towards palmitic acid and stearic acid. The polypeptide is Acyl-CoA Delta(11) desaturase (Spodoptera littoralis (Egyptian cotton leafworm)).